Consider the following 405-residue polypeptide: Solute carrier family 35 member E2A (405 aa).

Residues 1-22 (MSAAAKSQVPEEAAPGCEEEPK) form a disordered region. 10 consecutive transmembrane segments (helical) span residues 76-96 (LIYL…NKYI), 106-126 (MLGA…IFVP), 142-162 (FIMT…LGLV), 167-187 (VAVS…VIMS), 195-215 (TGLL…LCTA), 219-241 (SFNI…QNVF), 264-284 (AAAV…PVIG), 296-316 (IVLL…TAYA), 326-346 (FSVA…IVFG), and 347-367 (NKIT…VLLY). Positions 380-405 (SLVTATSRNPEDDTEPLVPQDSRQHH) are disordered.

It belongs to the TPT transporter family. SLC35E subfamily.

It is found in the membrane. In terms of biological role, putative transporter. This Mus musculus (Mouse) protein is Solute carrier family 35 member E2A (Slc35e2a).